Here is a 343-residue protein sequence, read N- to C-terminus: GDSL esterase/lipase EXL4 (343 aa).

A signal peptide spans 1–21 (MCSKITLVLTLFSSYFISTDA). N-linked (GlcNAc...) asparagine glycosylation occurs at N23. S35 serves as the catalytic Nucleophile. Active-site residues include D318 and H321.

This sequence belongs to the 'GDSL' lipolytic enzyme family. In terms of tissue distribution, flower buds and pollen.

Its subcellular location is the secreted. The protein localises to the extracellular space. The protein resides in the extracellular matrix. It localises to the pollen coat. Required for the formation of pollen coats and male fertility. This chain is GDSL esterase/lipase EXL4 (EXL4), found in Arabidopsis thaliana (Mouse-ear cress).